The sequence spans 380 residues: N-acetylneuraminate epimerase (380 aa).

The signal sequence occupies residues 1–21 (MKFTKTALFTVLAATAFAAQA). 7 Kelch repeats span residues 42–86 (TVYV…AGVN), 88–140 (KLYV…AADG), 142–176 (KIYF…AIFD), 177–222 (PYFN…AIKD), 225–274 (LLVV…IAGG), 296–349 (ANYE…SYNN), and 351–380 (VLLI…LTVE). The active-site Proton acceptor is the Glu-231.

Belongs to the NanM family. As to quaternary structure, homodimer.

It is found in the periplasm. The enzyme catalyses N-acetyl-alpha-neuraminate = N-acetyl-beta-neuraminate. Functionally, converts alpha-N-acetylneuranimic acid (Neu5Ac) to the beta-anomer, accelerating the equilibrium between the alpha- and beta-anomers. Probably facilitates sialidase-negative bacteria to compete successfully for limited amounts of extracellular Neu5Ac, which is likely taken up in the beta-anomer. In addition, the rapid removal of sialic acid from solution might be advantageous to the bacterium to damp down host responses. The chain is N-acetylneuraminate epimerase from Pasteurella multocida (strain Pm70).